A 719-amino-acid chain; its full sequence is Pesticidal crystal protein Cry1Ic (719 aa).

It belongs to the delta endotoxin family.

Functionally, promotes colloidosmotic lysis by binding to the midgut epithelial cells of insects. The polypeptide is Pesticidal crystal protein Cry1Ic (cry1Ic) (Bacillus thuringiensis).